The following is a 413-amino-acid chain: Putative zinc finger protein B0310.2 (413 aa).

Disordered regions lie at residues 130-151 (PIFS…KRSL) and 259-290 (VESD…TGPM). Over residues 270-281 (PSPSTGDITENE) the composition is skewed to polar residues. 2 consecutive C2H2-type zinc fingers follow at residues 306–330 (FICM…MFIH) and 336–358 (HTCP…KKTH).

It localises to the nucleus. The protein is Putative zinc finger protein B0310.2 of Caenorhabditis elegans.